Reading from the N-terminus, the 101-residue chain is ATP-dependent Clp protease adapter protein ClpS (101 aa).

The protein belongs to the ClpS family. As to quaternary structure, binds to the N-terminal domain of the chaperone ClpA.

Functionally, involved in the modulation of the specificity of the ClpAP-mediated ATP-dependent protein degradation. This is ATP-dependent Clp protease adapter protein ClpS from Mycobacterium bovis (strain ATCC BAA-935 / AF2122/97).